Here is a 204-residue protein sequence, read N- to C-terminus: B9 domain-containing protein 1 (204 aa).

One can recognise a C2 B9-type domain in the interval 9-127; sequence FLLMITGQVE…TIPMFVPEST (119 aa).

Belongs to the B9D family. In terms of assembly, part of the tectonic-like complex (also named B9 complex).

The protein resides in the cytoplasm. The protein localises to the cytoskeleton. It localises to the cilium basal body. Its function is as follows. Component of the tectonic-like complex, a complex localized at the transition zone of primary cilia and acting as a barrier that prevents diffusion of transmembrane proteins between the cilia and plasma membranes. Required for ciliogenesis and sonic hedgehog/SHH signaling. The sequence is that of B9 domain-containing protein 1 (B9d1) from Mus musculus (Mouse).